Reading from the N-terminus, the 418-residue chain is Protein fuzzy homolog (418 aa).

It belongs to the fuzzy family. In terms of assembly, interacts with rsg1. Interacts with intu and wdpcp; fuz, intu and wdpcp probably form the core CPLANE (ciliogenesis and planar polarity effectors) complex.

Its subcellular location is the cytoplasm. It localises to the cytoskeleton. It is found in the cilium basal body. Its function is as follows. Probable planar cell polarity effector involved in cilium biogenesis. Proposed to function as core component of the CPLANE (ciliogenesis and planar polarity effectors) complex involved in the recruitment of peripheral IFT-A proteins to basal bodies. May regulate protein and membrane transport to the cilium. May control the organization of the apical actin cytoskeleton, which is essential for the normal orientation of elongating ciliary microtubules. The protein is Protein fuzzy homolog (fuz) of Xenopus tropicalis (Western clawed frog).